Reading from the N-terminus, the 379-residue chain is Carboxypeptidase Y-deficient protein 8 (379 aa).

Residues 84-107 (HGSGNSSSKKVTSSTSSSSSNGSV) show a composition bias toward low complexity. The segment at 84–108 (HGSGNSSSKKVTSSTSSSSSNGSVD) is disordered. A Phosphoserine modification is found at S216.

This sequence belongs to the VPS26 family. Component of the retromer complex which consists of VPS29, VPS26, VPS35, VPS5 and VPS17. Component of a retromer subcomplex consisting of VPS29, VPS26 and VPS35.

Its function is as follows. Plays a role in vesicular protein sorting. Required for the endosome-to-Golgi retrieval of the vacuolar protein sorting receptor VPS10. Component of the membrane-associated retromer complex which is essential in endosome-to-Golgi retrograde transport. The VPS29-VPS26-VPS35 subcomplex may be involved in cargo selection. In Saccharomyces cerevisiae (strain ATCC 204508 / S288c) (Baker's yeast), this protein is Carboxypeptidase Y-deficient protein 8 (PEP8).